A 230-amino-acid polypeptide reads, in one-letter code: MRSRKLTGGVRSSARLRARSYSSASLASARDVTSSTSAKTTCLASSSHKATDRRTSKKFKYDKGHLVKAELQKLDPKSDISSLPKVAPVAPCENKFAEDSAEAAVSVPESREPPQGCSTPASEEPSVKAENGLSTEPSSAAAAQEPDDSSAGQAEPVPRTEEVRASVLQMDSSIFLDDDSNQPMPVSRFFGNVELMQDLPPASSSYPSMSRREFRKMHFRAKDDEDDAEG.

Disordered regions lie at residues 1–85 (MRSR…SLPK) and 97–166 (AEDS…VRAS). A compositionally biased stretch (low complexity) spans 11–30 (RSSARLRARSYSSASLASAR). A compositionally biased stretch (polar residues) spans 31–48 (DVTSSTSAKTTCLASSSH). Basic and acidic residues predominate over residues 49–78 (KATDRRTSKKFKYDKGHLVKAELQKLDPKS). At Ser-180 the chain carries Phosphoserine.

This sequence belongs to the UPF0688 family.

Its subcellular location is the nucleus. This chain is UPF0688 protein C1orf174 homolog, found in Mus musculus (Mouse).